Consider the following 325-residue polypeptide: Glutarate 2-hydroxylase (325 aa).

Fe cation-binding residues include histidine 160, aspartate 162, and histidine 292.

It belongs to the glutarate hydroxylase family. Homotetramer. Fe(2+) is required as a cofactor.

It carries out the reaction glutarate + 2-oxoglutarate + O2 = (S)-2-hydroxyglutarate + succinate + CO2. Its pathway is amino-acid degradation. Its function is as follows. Acts as an alpha-ketoglutarate-dependent dioxygenase catalyzing hydroxylation of glutarate (GA) to L-2-hydroxyglutarate (L2HG). Functions in a L-lysine degradation pathway that proceeds via cadaverine, glutarate and L-2-hydroxyglutarate. The polypeptide is Glutarate 2-hydroxylase (Citrobacter koseri (strain ATCC BAA-895 / CDC 4225-83 / SGSC4696)).